The following is a 785-amino-acid chain: Phenylalanine--tRNA ligase beta subunit (785 aa).

Residues 38–150 (CEHLKTFVIA…NTYNVGDTFF (113 aa)) enclose the tRNA-binding domain. In terms of domain architecture, B5 spans 394–470 (VDNIELNFFP…RLYGYDKICE (77 aa)). Mg(2+)-binding residues include aspartate 448, aspartate 454, glutamate 457, and glutamate 458. Positions 690 to 783 (SCYQSVKRDF…VAEKLGGVLR (94 aa)) constitute an FDX-ACB domain.

Belongs to the phenylalanyl-tRNA synthetase beta subunit family. Type 1 subfamily. As to quaternary structure, tetramer of two alpha and two beta subunits. Mg(2+) serves as cofactor.

It localises to the cytoplasm. It catalyses the reaction tRNA(Phe) + L-phenylalanine + ATP = L-phenylalanyl-tRNA(Phe) + AMP + diphosphate + H(+). This is Phenylalanine--tRNA ligase beta subunit from Ehrlichia canis (strain Jake).